The primary structure comprises 97 residues: Venom peptide HsVx1 (97 aa).

The first 20 residues, 1-20 (MSHLRIAVTFLCTLFALTAG), serve as a signal peptide directing secretion.

This sequence belongs to the scorpion La1-like peptide family. Post-translationally, contains 4 disulfide bonds. In terms of tissue distribution, expressed by the venom gland.

The protein resides in the secreted. In Heterometrus spinifer (Asia giant forest scorpion), this protein is Venom peptide HsVx1.